Here is a 373-residue protein sequence, read N- to C-terminus: Opsin Rh1 (373 aa).

The Extracellular portion of the chain corresponds to 1-49 (MESFAVAAAQLGPHFAPLSNGSVVDKVTPDMAHLISPYWNQFPAMDPIW). Residue Asn-20 is glycosylated (N-linked (GlcNAc...) asparagine). A helical membrane pass occupies residues 50 to 74 (AKILTAYMIMIGMISWCGNGVVIYI). Topologically, residues 75-86 (FATTKSLRTPAN) are cytoplasmic. A helical membrane pass occupies residues 87–112 (LLVINLAISDFGIMITNTPMMGINLY). Topologically, residues 113 to 126 (FETWVLGPMMCDIY) are extracellular. Cys-123 and Cys-200 are oxidised to a cystine. Residues 127 to 146 (AGLGSAFGCSSIWSMCMISL) traverse the membrane as a helical segment. The Cytoplasmic segment spans residues 147–165 (DRYQVIVKGMAGRPMTIPL). The helical transmembrane segment at 166–189 (ALGKIAYIWFMSSIWCLAPAFGWS) threads the bilayer. The Extracellular segment spans residues 190–213 (RYVPEGNLTSCGIDYLERDWNPRS). N-linked (GlcNAc...) asparagine glycosylation occurs at Asn-196. A helical membrane pass occupies residues 214 to 241 (YLIFYSIFVYYIPLFLICYSYWFIIAAV). Residues 242-276 (SAHEKAMREQAKKMNVKSLRSSEDAEKSAEGKLAK) are Cytoplasmic-facing. A helical membrane pass occupies residues 277–300 (VALVTITLWFMAWTPYLVINCMGL). Residues 301-307 (FKFEGLT) lie on the Extracellular side of the membrane. Residues 308–332 (PLNTIWGACFAKSAACYNPIVYGIS) form a helical membrane-spanning segment. N6-(retinylidene)lysine is present on Lys-319. Residues 333–373 (HPKYRLALKEKCPCCVFGKVDDGKSSDAQSQATASEAESKA) lie on the Cytoplasmic side of the membrane. Residues 354–373 (DGKSSDAQSQATASEAESKA) form a disordered region. Residues 358-373 (SDAQSQATASEAESKA) are compositionally biased toward low complexity.

This sequence belongs to the G-protein coupled receptor 1 family. Opsin subfamily. In terms of processing, phosphorylated on some or all of the serine and threonine residues present in the C-terminal region.

It localises to the cell projection. It is found in the rhabdomere membrane. In terms of biological role, visual pigments are the light-absorbing molecules that mediate vision. They consist of an apoprotein, opsin, covalently linked to cis-retinal. The polypeptide is Opsin Rh1 (ninaE) (Drosophila melanogaster (Fruit fly)).